Consider the following 272-residue polypeptide: Protein STAY-GREEN 1, chloroplastic (272 aa).

The N-terminal 50 residues, 1–50 (MGTLTTSLVVPSKLNNEQQSSIFIHKTRRKCKKNQSIVPVARLFGPAIFE), are a transit peptide targeting the chloroplast. The segment at 201 to 222 (TSPSSSSGGVGGVKSTSFTSNS) is disordered.

The protein belongs to the staygreen family. In terms of assembly, interacts with PSY1.

It is found in the plastid. It localises to the chloroplast. Required to trigger chlorophyll degradation during leaf senescence and fruit ripening. Binds directly PSY1 to regulate the accumulation of lycopene and beta-carotene in the maturing fruits. The polypeptide is Protein STAY-GREEN 1, chloroplastic (Solanum lycopersicum (Tomato)).